The following is a 90-amino-acid chain: Probable Fe(2+)-trafficking protein (90 aa).

It belongs to the Fe(2+)-trafficking protein family. In terms of assembly, monomer.

Its function is as follows. Could be a mediator in iron transactions between iron acquisition and iron-requiring processes, such as synthesis and/or repair of Fe-S clusters in biosynthetic enzymes. The chain is Probable Fe(2+)-trafficking protein from Proteus mirabilis (strain HI4320).